The primary structure comprises 532 residues: Bifunctional purine biosynthesis protein PurH (532 aa).

One can recognise an MGS-like domain in the interval 1-147 (MADRPIRQAL…KNHKDVAIVV (147 aa)).

Belongs to the PurH family.

It catalyses the reaction (6R)-10-formyltetrahydrofolate + 5-amino-1-(5-phospho-beta-D-ribosyl)imidazole-4-carboxamide = 5-formamido-1-(5-phospho-D-ribosyl)imidazole-4-carboxamide + (6S)-5,6,7,8-tetrahydrofolate. The enzyme catalyses IMP + H2O = 5-formamido-1-(5-phospho-D-ribosyl)imidazole-4-carboxamide. The protein operates within purine metabolism; IMP biosynthesis via de novo pathway; 5-formamido-1-(5-phospho-D-ribosyl)imidazole-4-carboxamide from 5-amino-1-(5-phospho-D-ribosyl)imidazole-4-carboxamide (10-formyl THF route): step 1/1. It participates in purine metabolism; IMP biosynthesis via de novo pathway; IMP from 5-formamido-1-(5-phospho-D-ribosyl)imidazole-4-carboxamide: step 1/1. The sequence is that of Bifunctional purine biosynthesis protein PurH from Haemophilus influenzae (strain ATCC 51907 / DSM 11121 / KW20 / Rd).